Reading from the N-terminus, the 445-residue chain is 3-phosphoshikimate 1-carboxyvinyltransferase (445 aa).

Positions 21, 22, and 26 each coordinate 3-phosphoshikimate. A phosphoenolpyruvate-binding site is contributed by lysine 21. Phosphoenolpyruvate contacts are provided by glycine 92 and arginine 120. Serine 165, glutamine 166, aspartate 307, and lysine 334 together coordinate 3-phosphoshikimate. Residue glutamine 166 participates in phosphoenolpyruvate binding. The Proton acceptor role is filled by aspartate 307. Residues arginine 338, arginine 379, and lysine 405 each contribute to the phosphoenolpyruvate site.

The protein belongs to the EPSP synthase family. Monomer.

Its subcellular location is the cytoplasm. The enzyme catalyses 3-phosphoshikimate + phosphoenolpyruvate = 5-O-(1-carboxyvinyl)-3-phosphoshikimate + phosphate. It functions in the pathway metabolic intermediate biosynthesis; chorismate biosynthesis; chorismate from D-erythrose 4-phosphate and phosphoenolpyruvate: step 6/7. Its function is as follows. Catalyzes the transfer of the enolpyruvyl moiety of phosphoenolpyruvate (PEP) to the 5-hydroxyl of shikimate-3-phosphate (S3P) to produce enolpyruvyl shikimate-3-phosphate and inorganic phosphate. The polypeptide is 3-phosphoshikimate 1-carboxyvinyltransferase (Chlamydia pneumoniae (Chlamydophila pneumoniae)).